A 447-amino-acid chain; its full sequence is UPF0210 protein LBUL_0934 (447 aa).

The protein belongs to the UPF0210 family. In terms of assembly, homodimer.

This chain is UPF0210 protein LBUL_0934, found in Lactobacillus delbrueckii subsp. bulgaricus (strain ATCC BAA-365 / Lb-18).